A 375-amino-acid chain; its full sequence is Chaperone protein DnaJ (375 aa).

Positions 5 to 70 constitute a J domain; sequence DYYEVLGVNR…RKRASYDQFG (66 aa). The CR-type zinc-finger motif lies at 133 to 211; sequence GLSRTIKVPT…CHGQGRQQQT (79 aa). The Zn(2+) site is built by C146, C149, C163, C166, C185, C188, C199, and C202. CXXCXGXG motif repeat units follow at residues 146 to 153, 163 to 170, 185 to 192, and 199 to 206; these read CKTCNGSG, CPRCNGSG, CSVCRGRG, and CTDCHGQG.

This sequence belongs to the DnaJ family. In terms of assembly, homodimer. Zn(2+) serves as cofactor.

It is found in the cytoplasm. Participates actively in the response to hyperosmotic and heat shock by preventing the aggregation of stress-denatured proteins and by disaggregating proteins, also in an autonomous, DnaK-independent fashion. Unfolded proteins bind initially to DnaJ; upon interaction with the DnaJ-bound protein, DnaK hydrolyzes its bound ATP, resulting in the formation of a stable complex. GrpE releases ADP from DnaK; ATP binding to DnaK triggers the release of the substrate protein, thus completing the reaction cycle. Several rounds of ATP-dependent interactions between DnaJ, DnaK and GrpE are required for fully efficient folding. Also involved, together with DnaK and GrpE, in the DNA replication of plasmids through activation of initiation proteins. The polypeptide is Chaperone protein DnaJ (Coxiella burnetii (strain CbuK_Q154) (Coxiella burnetii (strain Q154))).